The primary structure comprises 423 residues: D-tagatose-1,6-bisphosphate aldolase subunit GatZ (423 aa).

Belongs to the GatZ/KbaZ family. GatZ subfamily. In terms of assembly, forms a complex with GatY.

Its pathway is carbohydrate metabolism; D-tagatose 6-phosphate degradation; D-glyceraldehyde 3-phosphate and glycerone phosphate from D-tagatose 6-phosphate: step 2/2. In terms of biological role, component of the tagatose-1,6-bisphosphate aldolase GatYZ that is required for full activity and stability of the Y subunit. Could have a chaperone-like function for the proper and stable folding of GatY. When expressed alone, GatZ does not show any aldolase activity. Is involved in the catabolism of galactitol. This Salmonella newport (strain SL254) protein is D-tagatose-1,6-bisphosphate aldolase subunit GatZ.